Consider the following 501-residue polypeptide: Lysine--tRNA ligase (501 aa).

2 residues coordinate Mg(2+): E412 and E419.

This sequence belongs to the class-II aminoacyl-tRNA synthetase family. Homodimer. Requires Mg(2+) as cofactor.

The protein resides in the cytoplasm. It catalyses the reaction tRNA(Lys) + L-lysine + ATP = L-lysyl-tRNA(Lys) + AMP + diphosphate. In Dechloromonas aromatica (strain RCB), this protein is Lysine--tRNA ligase.